The chain runs to 98 residues: NADH-ubiquinone oxidoreductase chain 4L (98 aa).

Transmembrane regions (helical) follow at residues 1 to 21 (MSLV…GLLM), 29 to 49 (SLLC…LMIL), and 61 to 81 (IILL…LVMV).

Belongs to the complex I subunit 4L family. Core subunit of respiratory chain NADH dehydrogenase (Complex I) which is composed of 45 different subunits.

Its subcellular location is the mitochondrion inner membrane. It carries out the reaction a ubiquinone + NADH + 5 H(+)(in) = a ubiquinol + NAD(+) + 4 H(+)(out). Its function is as follows. Core subunit of the mitochondrial membrane respiratory chain NADH dehydrogenase (Complex I) which catalyzes electron transfer from NADH through the respiratory chain, using ubiquinone as an electron acceptor. Part of the enzyme membrane arm which is embedded in the lipid bilayer and involved in proton translocation. This chain is NADH-ubiquinone oxidoreductase chain 4L (MT-ND4L), found in Pantholops hodgsonii (Chiru).